We begin with the raw amino-acid sequence, 328 residues long: Helicase VP6-A (328 aa).

Disordered stretches follow at residues 31–128 (DWTE…TGAN) and 180–237 (VAEQ…SVGI). 3 stretches are compositionally biased toward basic and acidic residues: residues 36–61 (ETNK…EGRN), 71–83 (AKET…DRRI), and 96–109 (PGER…RGDG). K110 contributes to the ATP binding site. A compositionally biased stretch (gly residues) spans 110-128 (KVGGGGGDADAGVGTTGAN). Basic and acidic residues-rich tracts occupy residues 180–205 (VAEQ…AAER) and 214–230 (PHGD…KTSE).

Belongs to the orbivirus VP6 family. Homohexamer.

It is found in the virion. It carries out the reaction ATP + H2O = ADP + phosphate + H(+). In terms of biological role, ATP dependent RNA helicase essential for RNA packaging and viral transcription. Possesses ss- and dsRNA-binding capacity. The chain is Helicase VP6-A (Segment-9) from Bluetongue virus 1 (isolate South Africa) (BTV 1).